Here is a 504-residue protein sequence, read N- to C-terminus: Anaerobic nitric oxide reductase transcription regulator NorR (504 aa).

Asp57 is subject to 4-aspartylphosphate. Residues 187-416 form the Sigma-54 factor interaction domain; that stretch reads MIGLSPGMTQ…LEHAIHRAVV (230 aa). Residues 215 to 222 and 278 to 287 contribute to the ATP site; these read GETGTGKE and ADNGTLFLDE. A DNA-binding region (H-T-H motif) is located at residues 479–498; the sequence is WAACARMLETDVANLHRLAK.

The protein operates within nitrogen metabolism; nitric oxide reduction. Its function is as follows. Required for the expression of anaerobic nitric oxide (NO) reductase, acts as a transcriptional activator for at least the norVW operon. Activation also requires sigma-54. In Escherichia coli O127:H6 (strain E2348/69 / EPEC), this protein is Anaerobic nitric oxide reductase transcription regulator NorR.